A 353-amino-acid polypeptide reads, in one-letter code: UDP-3-O-acylglucosamine N-acyltransferase (353 aa).

His242 serves as the catalytic Proton acceptor.

It belongs to the transferase hexapeptide repeat family. LpxD subfamily. As to quaternary structure, homotrimer.

The enzyme catalyses a UDP-3-O-[(3R)-3-hydroxyacyl]-alpha-D-glucosamine + a (3R)-hydroxyacyl-[ACP] = a UDP-2-N,3-O-bis[(3R)-3-hydroxyacyl]-alpha-D-glucosamine + holo-[ACP] + H(+). The protein operates within bacterial outer membrane biogenesis; LPS lipid A biosynthesis. Functionally, catalyzes the N-acylation of UDP-3-O-acylglucosamine using 3-hydroxyacyl-ACP as the acyl donor. Is involved in the biosynthesis of lipid A, a phosphorylated glycolipid that anchors the lipopolysaccharide to the outer membrane of the cell. The chain is UDP-3-O-acylglucosamine N-acyltransferase from Pseudomonas aeruginosa (strain LESB58).